The primary structure comprises 431 residues: 3-phosphoshikimate 1-carboxyvinyltransferase (431 aa).

Residues lysine 26, serine 27, and arginine 31 each coordinate 3-phosphoshikimate. Phosphoenolpyruvate is bound at residue lysine 26. Positions 99 and 127 each coordinate phosphoenolpyruvate. 3-phosphoshikimate-binding residues include serine 170, serine 171, glutamine 172, serine 199, glutamate 314, and histidine 343. Phosphoenolpyruvate is bound at residue glutamine 172. Glutamate 314 serves as the catalytic Proton acceptor. Phosphoenolpyruvate is bound by residues arginine 347, arginine 388, and lysine 413.

Belongs to the EPSP synthase family. As to quaternary structure, monomer.

The protein localises to the cytoplasm. It catalyses the reaction 3-phosphoshikimate + phosphoenolpyruvate = 5-O-(1-carboxyvinyl)-3-phosphoshikimate + phosphate. It functions in the pathway metabolic intermediate biosynthesis; chorismate biosynthesis; chorismate from D-erythrose 4-phosphate and phosphoenolpyruvate: step 6/7. Its function is as follows. Catalyzes the transfer of the enolpyruvyl moiety of phosphoenolpyruvate (PEP) to the 5-hydroxyl of shikimate-3-phosphate (S3P) to produce enolpyruvyl shikimate-3-phosphate and inorganic phosphate. The chain is 3-phosphoshikimate 1-carboxyvinyltransferase from Mycobacterium ulcerans (strain Agy99).